Reading from the N-terminus, the 443-residue chain is F-box/LRR-repeat protein At2g42720 (443 aa).

Residues 1–47 form the F-box domain; that stretch reads MDRISSLPDEILEHILSFLSTKEAALTSSLSTRWKNVFVFVPSLHLD. LRR repeat units follow at residues 139 to 167, 169 to 194, 201 to 236, 271 to 296, 323 to 348, and 363 to 389; these read KLRL…CLDT, DFDG…VLED, CGSV…ELSC, SSHL…HLTS, DKKQ…VFKG, and CSGI…SYQG.

This is F-box/LRR-repeat protein At2g42720 from Arabidopsis thaliana (Mouse-ear cress).